The primary structure comprises 442 residues: Proline--tRNA ligase (442 aa).

The protein belongs to the class-II aminoacyl-tRNA synthetase family. ProS type 2 subfamily. In terms of assembly, homodimer.

The protein resides in the cytoplasm. It carries out the reaction tRNA(Pro) + L-proline + ATP = L-prolyl-tRNA(Pro) + AMP + diphosphate. In terms of biological role, catalyzes the attachment of proline to tRNA(Pro) in a two-step reaction: proline is first activated by ATP to form Pro-AMP and then transferred to the acceptor end of tRNA(Pro). This chain is Proline--tRNA ligase, found in Mesorhizobium japonicum (strain LMG 29417 / CECT 9101 / MAFF 303099) (Mesorhizobium loti (strain MAFF 303099)).